Consider the following 978-residue polypeptide: Tyrosine-protein kinase transforming protein fms (978 aa).

Residues 1–543 (RMPSGPGHYG…IGAHTPLPDE (543 aa)) are Extracellular-facing. 5 Ig-like C2-type domains span residues 55 to 134 (PVIQ…IHLY), 141 to 231 (PWKV…KVQK), 236 to 331 (PATL…RVVE), 333 to 431 (AYSN…LTLR), and 434 to 533 (PEVR…WPIS). Cysteine 76 and cysteine 118 are joined by a disulfide. Residues asparagine 79, asparagine 107, asparagine 128, asparagine 187, asparagine 309, asparagine 320, asparagine 336, asparagine 369, asparagine 444, asparagine 511, and asparagine 524 are each glycosylated (N-linked (GlcNAc...) asparagine; by host). Intrachain disulfides connect cysteine 161–cysteine 211 and cysteine 258–cysteine 312. An intrachain disulfide couples cysteine 451 to cysteine 516. The chain crosses the membrane as a helical span at residues 544–568 (LLFTPVLLTCMSIMALLLLLLLLLL). Residues 569–978 (YKYKQKPKYQ…PWQRTPPVAR (410 aa)) are Cytoplasmic-facing. The region spanning 613–942 (LQFGKTLGTG…PTFQQICSLL (330 aa)) is the Protein kinase domain. ATP contacts are provided by residues 619 to 627 (LGTGAFGKV) and lysine 647. Aspartate 810 functions as the Proton acceptor in the catalytic mechanism. Tyrosine 841 carries the post-translational modification Phosphotyrosine; by autocatalysis. Residues 952-978 (VPNYTNLPSSSSSRLLRPWQRTPPVAR) are disordered. Low complexity predominate over residues 958–969 (LPSSSSSRLLRP). A Phosphothreonine modification is found at threonine 973.

It belongs to the protein kinase superfamily. Tyr protein kinase family. CSF-1/PDGF receptor subfamily.

The protein localises to the membrane. It carries out the reaction L-tyrosyl-[protein] + ATP = O-phospho-L-tyrosyl-[protein] + ADP + H(+). Its function is as follows. Truncated version of the receptor for colony-stimulating factor 1 (CSF-1). In Felidae (cat family), this protein is Tyrosine-protein kinase transforming protein fms (V-FMS).